The sequence spans 171 residues: Methylated-DNA--protein-cysteine methyltransferase (171 aa).

Cys139 (nucleophile; methyl group acceptor) is an active-site residue.

It belongs to the MGMT family.

Its subcellular location is the cytoplasm. It catalyses the reaction a 6-O-methyl-2'-deoxyguanosine in DNA + L-cysteinyl-[protein] = S-methyl-L-cysteinyl-[protein] + a 2'-deoxyguanosine in DNA. The enzyme catalyses a 4-O-methyl-thymidine in DNA + L-cysteinyl-[protein] = a thymidine in DNA + S-methyl-L-cysteinyl-[protein]. Its function is as follows. Involved in the cellular defense against the biological effects of O6-methylguanine (O6-MeG) and O4-methylthymine (O4-MeT) in DNA. Repairs the methylated nucleobase in DNA by stoichiometrically transferring the methyl group to a cysteine residue in the enzyme. This is a suicide reaction: the enzyme is irreversibly inactivated. The chain is Methylated-DNA--protein-cysteine methyltransferase from Salmonella typhi.